The following is a 1121-amino-acid chain: Putative ATP-dependent RNA helicase ECM32 (1121 aa).

Residues 157–187 (NSTRKPRKKGGRRVGRGKKGRKGAKIKKEKK) form a disordered region. Positions 160–184 (RKPRKKGGRRVGRGKKGRKGAKIKK) are enriched in basic residues. Position 227 is a phosphoserine (serine 227). The interval 233–452 (AKVSKSETSR…NQEKNNGKTK (220 aa)) is disordered. Over residues 251-263 (NKGKGNKANHKKN) the composition is skewed to basic residues. Residues 278–287 (IRNNVRNSQP) are compositionally biased toward polar residues. The span at 307–316 (GKNESVDKHQ) shows a compositional bias: basic and acidic residues. Residues 323–336 (LNGNGSGSTNTTGL) show a composition bias toward low complexity. The segment covering 342–363 (DHAGQKTKGNDKTGNKNPREAK) has biased composition (basic and acidic residues). Positions 376 to 413 (KSNNQPNKGTSRWTIGSDTESSREPSISPNENTTSITK) are enriched in polar residues. Phosphoserine is present on serine 392. The span at 426 to 452 (LNEKSKTTTMPKKLETKNQEKNNGKTK) shows a compositional bias: basic and acidic residues. Position 465 is a phosphothreonine (threonine 465). ATP is bound at residue 670 to 677 (GPPGTGKT).

Belongs to the DNA2/NAM7 helicase family. Interacts with the peptidyl release factors SUP35 and weakly with SUP45.

It localises to the cytoplasm. It catalyses the reaction ATP + H2O = ADP + phosphate + H(+). Probable RNA helicase, which may be involved in modulation of the translation termination process. Probably unwinds double-stranded RNA. In vitro, unwinds covalently closed, circular DNA in the presence of a DNA topoisomerase TOP1 and replication factor-A protein RFA1. The protein is Putative ATP-dependent RNA helicase ECM32 (ECM32) of Saccharomyces cerevisiae (strain ATCC 204508 / S288c) (Baker's yeast).